A 357-amino-acid chain; its full sequence is Peptide chain release factor 1 (357 aa).

At Gln235 the chain carries N5-methylglutamine.

It belongs to the prokaryotic/mitochondrial release factor family. Post-translationally, methylated by PrmC. Methylation increases the termination efficiency of RF1.

The protein resides in the cytoplasm. Functionally, peptide chain release factor 1 directs the termination of translation in response to the peptide chain termination codons UAG and UAA. The chain is Peptide chain release factor 1 from Alkaliphilus metalliredigens (strain QYMF).